The primary structure comprises 607 residues: 1-deoxy-D-xylulose-5-phosphate synthase (607 aa).

Thiamine diphosphate-binding positions include histidine 63 and 104 to 106; that span reads GHS. Aspartate 135 serves as a coordination point for Mg(2+). Thiamine diphosphate contacts are provided by residues 136-137, asparagine 164, tyrosine 271, and glutamate 351; that span reads GA. Residue asparagine 164 participates in Mg(2+) binding.

The protein belongs to the transketolase family. DXPS subfamily. As to quaternary structure, homodimer. Requires Mg(2+) as cofactor. The cofactor is thiamine diphosphate.

The catalysed reaction is D-glyceraldehyde 3-phosphate + pyruvate + H(+) = 1-deoxy-D-xylulose 5-phosphate + CO2. It participates in metabolic intermediate biosynthesis; 1-deoxy-D-xylulose 5-phosphate biosynthesis; 1-deoxy-D-xylulose 5-phosphate from D-glyceraldehyde 3-phosphate and pyruvate: step 1/1. Catalyzes the acyloin condensation reaction between C atoms 2 and 3 of pyruvate and glyceraldehyde 3-phosphate to yield 1-deoxy-D-xylulose-5-phosphate (DXP). The chain is 1-deoxy-D-xylulose-5-phosphate synthase from Campylobacter hominis (strain ATCC BAA-381 / DSM 21671 / CCUG 45161 / LMG 19568 / NCTC 13146 / CH001A).